A 319-amino-acid chain; its full sequence is Ribosomal RNA small subunit methyltransferase H (319 aa).

S-adenosyl-L-methionine is bound by residues 38-40 (GGH), aspartate 58, phenylalanine 82, aspartate 104, and glutamine 111.

It belongs to the methyltransferase superfamily. RsmH family.

It localises to the cytoplasm. The catalysed reaction is cytidine(1402) in 16S rRNA + S-adenosyl-L-methionine = N(4)-methylcytidine(1402) in 16S rRNA + S-adenosyl-L-homocysteine + H(+). In terms of biological role, specifically methylates the N4 position of cytidine in position 1402 (C1402) of 16S rRNA. The sequence is that of Ribosomal RNA small subunit methyltransferase H from Histophilus somni (strain 129Pt) (Haemophilus somnus).